Consider the following 202-residue polypeptide: MKALTTRQQEVFDLIRDHISQTGMPPTRAEIAQRLGFRSPNAAEEHLKALARKGAIEIVSGASRGIRLLTEEEQGLPLIGRVAAGEPLLAQQHIEGHYQVDPSMFKPNADFLLRVSGMSMKDIGILDGDLLAVHKTQDVRNGQVVVARIDEEVTVKRLKKQGNVVELLPENSEFSPIVVDLRQQSFTIEGLAVGVIRNGEWL.

The H-T-H motif DNA-binding region spans 28 to 48 (RAEIAQRLGFRSPNAAEEHLK). Catalysis depends on for autocatalytic cleavage activity residues serine 119 and lysine 156.

The protein belongs to the peptidase S24 family. Homodimer.

It catalyses the reaction Hydrolysis of Ala-|-Gly bond in repressor LexA.. In terms of biological role, represses a number of genes involved in the response to DNA damage (SOS response), including recA and lexA. Binds to the 16 bp palindromic sequence 5'-CTGTATATATATACAG-3'. In the presence of single-stranded DNA, RecA interacts with LexA causing an autocatalytic cleavage which disrupts the DNA-binding part of LexA, leading to derepression of the SOS regulon and eventually DNA repair. The polypeptide is LexA repressor (Klebsiella pneumoniae subsp. pneumoniae (strain ATCC 700721 / MGH 78578)).